Reading from the N-terminus, the 157-residue chain is Arginine repressor (157 aa).

The protein belongs to the ArgR family.

It localises to the cytoplasm. The protein operates within amino-acid biosynthesis; L-arginine biosynthesis [regulation]. Its function is as follows. Regulates arginine biosynthesis genes. The polypeptide is Arginine repressor (Deinococcus deserti (strain DSM 17065 / CIP 109153 / LMG 22923 / VCD115)).